The primary structure comprises 150 residues: D-aminoacyl-tRNA deacylase (150 aa).

The Gly-cisPro motif, important for rejection of L-amino acids motif lies at 137–138 (GP).

It belongs to the DTD family. Homodimer.

It localises to the cytoplasm. It catalyses the reaction glycyl-tRNA(Ala) + H2O = tRNA(Ala) + glycine + H(+). The catalysed reaction is a D-aminoacyl-tRNA + H2O = a tRNA + a D-alpha-amino acid + H(+). In terms of biological role, an aminoacyl-tRNA editing enzyme that deacylates mischarged D-aminoacyl-tRNAs. Also deacylates mischarged glycyl-tRNA(Ala), protecting cells against glycine mischarging by AlaRS. Acts via tRNA-based rather than protein-based catalysis; rejects L-amino acids rather than detecting D-amino acids in the active site. By recycling D-aminoacyl-tRNA to D-amino acids and free tRNA molecules, this enzyme counteracts the toxicity associated with the formation of D-aminoacyl-tRNA entities in vivo and helps enforce protein L-homochirality. This is D-aminoacyl-tRNA deacylase from Listeria monocytogenes serotype 4b (strain CLIP80459).